The chain runs to 505 residues: Keratin, type II cuticular Hb1 (505 aa).

Residues 1–106 are head; that stretch reads MTCGSGFGGR…PNAQCVKQEE (106 aa). Residues 106 to 417 enclose the IF rod domain; it reads EKEQIKSLNS…RLLEGEEQRL (312 aa). The interval 107–141 is coil 1A; that stretch reads KEQIKSLNSRFAAFIDKVRFLEQQNKLLETKLQFY. A linker 1 region spans residues 142 to 151; the sequence is QNRECCQSNL. The tract at residues 152–252 is coil 1B; sequence EPLFEGYIET…YEEEILILQS (101 aa). Residue Lys212 forms a Glycyl lysine isopeptide (Lys-Gly) (interchain with G-Cter in SUMO1) linkage. Residues 253–269 form a linker 12 region; that stretch reads HISDTSVVVKLDNSRDL. A coil 2 region spans residues 270-413; that stretch reads NMDCIIAEIK…ATYRRLLEGE (144 aa). The interval 414–505 is tail; it reads EQRLCEGIGA…GSCGSSCRKC (92 aa).

It belongs to the intermediate filament family. As to quaternary structure, heterotetramer of two type I and two type II keratins. In terms of tissue distribution, abundantly expressed in the differentiating cortex of growing (anagen) hair. Expression is restricted to the keratinocytes of the hair cortex and is absent from inner root sheath and medulla. Expressed in malignant lymph node tissue in breast carcinoma tissue.

This chain is Keratin, type II cuticular Hb1 (KRT81), found in Homo sapiens (Human).